The primary structure comprises 203 residues: Potassium channel Cha6605_3372 (203 aa).

Over 1–7 (MVEAPEQ) the chain is Cytoplasmic. A helical membrane pass occupies residues 8–31 (SETGRIEAFSDGVFAIAITLLVLE). Residues 12 to 18 (RIEAFSD) carry the RxxxFSD motif motif. The Extracellular segment spans residues 32 to 52 (IKVPQHKIVETVGLVSSLLSL). A short helix H1 region spans residues 37–42 (HKIVET). The short helix H2 stretch occupies residues 44 to 50 (GLVSSLL). A helical transmembrane segment spans residues 53–78 (WPSYLAFLTSFASILVMWVNHHRIFS). Over 79 to 84 (LVARTD) the chain is Cytoplasmic. The helical transmembrane segment at 85–110 (HAFFYWNGLLLMLVTFVPFPTALLAE) threads the bilayer. The Extracellular segment spans residues 111–117 (YLIHPQA). A helical transmembrane segment spans residues 118–142 (RVAASVYAGIFLAIAIVFNRLWKHA). The Cytoplasmic portion of the chain corresponds to 143 to 154 (ATADRLLAQKAD). A helical membrane pass occupies residues 155 to 181 (RHEVDAITKQYRFGPGLYLVAFALSFI). Over 182–183 (SV) the chain is Extracellular. A helical membrane pass occupies residues 184–199 (WLSVGVCFVLAIYFAL). The Cytoplasmic portion of the chain corresponds to 200-203 (RSNA).

It belongs to the TMEM175 family. Homotetramer.

It is found in the membrane. The catalysed reaction is K(+)(in) = K(+)(out). Its function is as follows. Potassium channel. The channel is permeable for K(+), Rb(+) and Cs(+), while it is unable to conduct Na(+). The chain is Potassium channel Cha6605_3372 from Chamaesiphon minutus (strain ATCC 27169 / PCC 6605).